The sequence spans 418 residues: RapA guanosine triphosphatase-activating protein B (418 aa).

The 266-residue stretch at 142-407 folds into the Rap-GAP domain; that stretch reads LVKVCEPEFN…EKASALINVI (266 aa). Positions 304–339 are disordered; that stretch reads NRVVGEQPSPSLTTTTTTTTTTSPTINSNSPTPSNK. A compositionally biased stretch (low complexity) spans 311–338; the sequence is PSPSLTTTTTTTTTTSPTINSNSPTPSN.

In terms of biological role, mediates the deactivation of rap1 during multicellular development and is required for normal morphogenesis. Also required for the correct patterning of specific subtypes of prestalk cells. This is RapA guanosine triphosphatase-activating protein B (rapgapB) from Dictyostelium discoideum (Social amoeba).